The primary structure comprises 389 residues: Glutamate 5-kinase (389 aa).

Position 16 (lysine 16) interacts with ATP. The substrate site is built by serine 56, aspartate 143, and asparagine 155. An ATP-binding site is contributed by serine 175–aspartate 176. The 78-residue stretch at alanine 281 to alanine 358 folds into the PUA domain.

The protein belongs to the glutamate 5-kinase family.

The protein localises to the cytoplasm. It carries out the reaction L-glutamate + ATP = L-glutamyl 5-phosphate + ADP. The protein operates within amino-acid biosynthesis; L-proline biosynthesis; L-glutamate 5-semialdehyde from L-glutamate: step 1/2. Catalyzes the transfer of a phosphate group to glutamate to form L-glutamate 5-phosphate. The chain is Glutamate 5-kinase from Rhizobium etli (strain CIAT 652).